The sequence spans 338 residues: Delta(9)-fatty-acid desaturase fat-7 (338 aa).

4 helical membrane-spanning segments follow: residues 51–71 (VALFAALHVAAAIGLYELVFH), 76–96 (TAVFSFALYVFSGFGITAGAH), 194–214 (YFPLVILFCFILPTIIPVYFW), and 218–238 (AFIAFYVAGTFRYCFTLHATW).

The protein belongs to the fatty acid desaturase type 1 family. Expressed in the intestine in adult worms and in all four larval stages.

It is found in the membrane. The enzyme catalyses octadecanoyl-CoA + 2 Fe(II)-[cytochrome b5] + O2 + 2 H(+) = (9Z)-octadecenoyl-CoA + 2 Fe(III)-[cytochrome b5] + 2 H2O. The catalysed reaction is hexadecanoyl-CoA + 2 Fe(II)-[cytochrome b5] + O2 + 2 H(+) = (9Z)-hexadecenoyl-CoA + 2 Fe(III)-[cytochrome b5] + 2 H2O. It catalyses the reaction heptadecanoyl-CoA + 2 Fe(II)-[cytochrome b5] + O2 + 2 H(+) = (9Z)-heptadecenoyl-CoA + 2 Fe(III)-[cytochrome b5] + 2 H2O. It carries out the reaction (11E)-octadecenoyl-CoA + 2 Fe(II)-[cytochrome b5] + O2 + 2 H(+) = (9Z,11E)-octadecadienoyl-CoA + 2 Fe(III)-[cytochrome b5] + 2 H2O. It functions in the pathway lipid metabolism; monounsaturated fatty acid biosynthesis. The protein operates within lipid metabolism; fatty acid metabolism. In terms of biological role, delta(9)-fatty acid desaturase that acts preferentially on stearoyl-CoA (octadecanoyl-CoA) producing the monounsaturated oleoyl-CoA ((9Z)-octadecenoyl-CoA), one of the most abundant monounsaturated fatty acid in Caenorhabditis elegans phospholipids and triacylglycerols. Also acts on palmitoyl-CoA (hexadecanoyl-CoA), heptadecanoyl-CoA and (11E)-octadecenoyl-CoA (trans-vaccenoyl-CoA), the monounsaturated fatty acids (MUFAs) produced are further used by several other desaturases and elongases as substrates to synthesize polyunsaturated fatty acids (PUFAs) endogenously (PUFAs are essential for membrane structure and many cellular and physiological processes). Unlike plants, Caenorhabditis elegans desaturases seem to use fatty acyl-CoAs as substrates. Partially inhibits expression of genes involved in beta-oxidation, such as ech-1 and acs-2, perhaps signaling via the actions of one of its fatty acid products. May form part of a negative feedback loop with the transcription factor nhr-49 to limit beta-oxidation, in which nhr-49 stimulates expression of fat-7 and acs-2, and in turn fat-7 indirectly inhibits acs-2 and other genes also involved in beta-oxidation. In Caenorhabditis elegans, this protein is Delta(9)-fatty-acid desaturase fat-7 (fat-7).